Consider the following 239-residue polypeptide: Host range factor p28 (239 aa).

The KilA-N domain occupies 21–131 (YIDEPNDIRL…QSILRGLVNW (111 aa)). The segment at 170–223 (CGICYEVVYSKRLENDRYFGLLDSCNHIFCITCINIWHKTRRETGASDNCPICR) adopts an RING-type zinc-finger fold.

Belongs to the orthopoxvirus OPG021 family.

It localises to the host cytoplasm. Its function is as follows. RING-finger E3 ubiquitin ligase which catalyzes the formation of both 'Lys-48'- and 'Lys-63'-linked polyubiquitin chains. Plays an important role in virulence by acting as an anti-apoptotic factor. This is Host range factor p28 (OPG021) from Homo sapiens (Human).